Reading from the N-terminus, the 89-residue chain is Small ribosomal subunit protein bS20 (89 aa).

The segment at 1 to 20 is disordered; it reads MANHKSAEKRARQTIKRTER.

It belongs to the bacterial ribosomal protein bS20 family.

Functionally, binds directly to 16S ribosomal RNA. The sequence is that of Small ribosomal subunit protein bS20 from Campylobacter curvus (strain 525.92).